We begin with the raw amino-acid sequence, 140 residues long: Putative nickel-responsive regulator (140 aa).

Ni(2+)-binding residues include His81, His92, His94, and Cys100.

This sequence belongs to the transcriptional regulatory CopG/NikR family. The cofactor is Ni(2+).

Transcriptional regulator. This Methanococcoides burtonii (strain DSM 6242 / NBRC 107633 / OCM 468 / ACE-M) protein is Putative nickel-responsive regulator.